We begin with the raw amino-acid sequence, 133 residues long: Phosphomevalonate dehydratase small subunit (133 aa).

Serine 62 serves as the catalytic Proton acceptor.

Belongs to the AcnX type II small subunit family. As to quaternary structure, heterodimer composed of a large subunit (PMDh-L) and a small subunit (PMDh-S).

It carries out the reaction (R)-5-phosphomevalonate = (2E)-3-methyl-5-phosphooxypent-2-enoate + H2O. Its pathway is isoprenoid biosynthesis; isopentenyl diphosphate biosynthesis via mevalonate pathway. Component of a hydro-lyase that catalyzes the dehydration of mevalonate 5-phosphate (MVA5P) to form trans-anhydromevalonate 5-phosphate (tAHMP). Involved in the archaeal mevalonate (MVA) pathway, which provides fundamental precursors for isoprenoid biosynthesis, such as isopentenyl diphosphate (IPP) and dimethylallyl diphosphate (DMAPP). The chain is Phosphomevalonate dehydratase small subunit from Thermococcus kodakarensis (strain ATCC BAA-918 / JCM 12380 / KOD1) (Pyrococcus kodakaraensis (strain KOD1)).